Consider the following 1338-residue polypeptide: Serine/threonine-protein kinase cek1 (1338 aa).

One can recognise a PAS domain in the interval Ser28 to Asp98. The segment at Pro484–Arg554 is disordered. Positions Pro491–Ser501 are enriched in polar residues. Residue Ser525 is modified to Phosphoserine. Positions Pro541–Phe550 are enriched in polar residues. The region spanning Tyr589–Phe958 is the Protein kinase domain. Residues Ile595–Val603 and Lys618 each bind ATP. Asp713 serves as the catalytic Proton acceptor. At Ser748 the chain carries Phosphoserine. The span at Glu813–Pro842 shows a compositional bias: polar residues. Disordered stretches follow at residues Glu813–Val844, Lys1010–Asn1035, and Ser1159–Asp1185. Residues Lys959–Asn1057 form the AGC-kinase C-terminal domain. Over residues Ser1159 to Ala1174 the composition is skewed to low complexity. Ser1211 is modified (phosphoserine).

The protein belongs to the protein kinase superfamily. Ser/Thr protein kinase family.

It catalyses the reaction L-seryl-[protein] + ATP = O-phospho-L-seryl-[protein] + ADP + H(+). The catalysed reaction is L-threonyl-[protein] + ATP = O-phospho-L-threonyl-[protein] + ADP + H(+). Functionally, may facilitate the progression of anaphase through direct or indirect interaction with the cut8 protein. The polypeptide is Serine/threonine-protein kinase cek1 (cek1) (Schizosaccharomyces pombe (strain 972 / ATCC 24843) (Fission yeast)).